The primary structure comprises 133 residues: Sigma factor-binding protein Crl (133 aa).

The essential for activity stretch occupies residues 99–122 (TLDDFYVKLTKFVKEDCQLDLQAS).

Belongs to the Crl family.

The protein localises to the cytoplasm. Binds to the sigma-S subunit of RNA polymerase, activating expression of sigma-S-regulated genes. Stimulates RNA polymerase holoenzyme formation and may bind to several other sigma factors, such as sigma-70 and sigma-32. The sequence is that of Sigma factor-binding protein Crl from Photobacterium profundum (strain SS9).